A 481-amino-acid polypeptide reads, in one-letter code: Threonine synthase (481 aa).

Residue lysine 118 is modified to N6-(pyridoxal phosphate)lysine.

It belongs to the threonine synthase family. As to quaternary structure, monomer. It depends on pyridoxal 5'-phosphate as a cofactor.

The enzyme catalyses O-phospho-L-homoserine + H2O = L-threonine + phosphate. It participates in amino-acid biosynthesis; L-threonine biosynthesis; L-threonine from L-aspartate: step 5/5. Its function is as follows. Catalyzes the gamma-elimination of phosphate from L-phosphohomoserine and the beta-addition of water to produce L-threonine. The protein is Threonine synthase (thrC) of Corynebacterium glutamicum (strain ATCC 13032 / DSM 20300 / JCM 1318 / BCRC 11384 / CCUG 27702 / LMG 3730 / NBRC 12168 / NCIMB 10025 / NRRL B-2784 / 534).